A 339-amino-acid polypeptide reads, in one-letter code: UDP-3-O-acylglucosamine N-acyltransferase (339 aa).

His248 functions as the Proton acceptor in the catalytic mechanism.

It belongs to the transferase hexapeptide repeat family. LpxD subfamily. In terms of assembly, homotrimer.

It carries out the reaction a UDP-3-O-[(3R)-3-hydroxyacyl]-alpha-D-glucosamine + a (3R)-hydroxyacyl-[ACP] = a UDP-2-N,3-O-bis[(3R)-3-hydroxyacyl]-alpha-D-glucosamine + holo-[ACP] + H(+). It participates in bacterial outer membrane biogenesis; LPS lipid A biosynthesis. Catalyzes the N-acylation of UDP-3-O-acylglucosamine using 3-hydroxyacyl-ACP as the acyl donor. Is involved in the biosynthesis of lipid A, a phosphorylated glycolipid that anchors the lipopolysaccharide to the outer membrane of the cell. This Caulobacter vibrioides (strain NA1000 / CB15N) (Caulobacter crescentus) protein is UDP-3-O-acylglucosamine N-acyltransferase.